A 73-amino-acid polypeptide reads, in one-letter code: Putative membrane protein insertion efficiency factor (73 aa).

Belongs to the UPF0161 family.

The protein localises to the cell inner membrane. Could be involved in insertion of integral membrane proteins into the membrane. This chain is Putative membrane protein insertion efficiency factor, found in Neisseria meningitidis serogroup C (strain 053442).